Here is a 413-residue protein sequence, read N- to C-terminus: Paxillin homolog 1 (413 aa).

Residues 33 to 45 are compositionally biased toward basic and acidic residues; it reads HISDRRSQSRDDF. The tract at residues 33–157 is disordered; it reads HISDRRSQSR…PLHSDSMIGT (125 aa). Polar residues predominate over residues 49-69; it reads YDLQGNLNTQSVSNGNITTSP. Over residues 73-92 the composition is skewed to basic and acidic residues; the sequence is RSSEGKDYSKSQERIYENES. The segment covering 118-143 has biased composition (polar residues); sequence ASSSRKSLGPPSQAQSYSDVRSNGRS. LIM zinc-binding domains lie at 174-232, 233-292, 293-350, and 351-410; these read GDCA…NQFS, PKCQ…LFAP, KCNG…ESRG, and SICS…TYAL.

Belongs to the paxillin family. As to expression, isoform a: Expressed in all 95 body wall muscle cells as well as in the pharyngeal muscle cells (at protein level). Isoform c: Expressed in the body wall muscle cells and in the pharyngeal muscle cells.

It is found in the cell junction. The protein resides in the adherens junction. The protein localises to the cell membrane. Its subcellular location is the cytoplasm. It localises to the myofibril. It is found in the sarcomere. The protein resides in the m line. The protein localises to the cell projection. Its subcellular location is the podosome. Its function is as follows. Required for myofilament organization of the pharyngeal sarcomeres and for pharyngeal muscle contractions and hence for pharyngeal pumping. Together with lin-8, might be required for myofilament organization in the body wall muscles. The protein is Paxillin homolog 1 (pxl-1) of Caenorhabditis elegans.